Reading from the N-terminus, the 237-residue chain is Cysteine-rich venom protein ENH2 (237 aa).

The N-terminal stretch at 1-18 (MIVFILLSLAAVLQQFVA) is a signal peptide. The region spanning 37-165 (VDMHNSFRRS…PYNYFYVCQY (129 aa)) is the SCP domain. Cystine bridges form between C74-C152, C91-C166, C147-C163, C185-C192, C188-C197, C210-C228, and C219-C232. The region spanning 201–237 (CPITNTFTNCDSLLQQNSCEDSYIKTNCGASCFGQDK) is the ShKT domain.

It belongs to the CRISP family. As to expression, expressed by the venom gland.

It is found in the secreted. Functionally, blocks contraction of smooth muscle elicited by high potassium-induced depolarization, but does not block caffeine-stimulated contraction. May target voltage-gated calcium channels on smooth muscle. The chain is Cysteine-rich venom protein ENH2 from Pseudoferania polylepis (Macleay's water snake).